A 362-amino-acid chain; its full sequence is Chorismate synthase (362 aa).

Arginine 47 is an NADP(+) binding site. FMN-binding positions include 124–126 (RSS), glycine 286, 301–305 (KPTAT), and arginine 327.

This sequence belongs to the chorismate synthase family. In terms of assembly, homotetramer. FMNH2 is required as a cofactor.

The catalysed reaction is 5-O-(1-carboxyvinyl)-3-phosphoshikimate = chorismate + phosphate. The protein operates within metabolic intermediate biosynthesis; chorismate biosynthesis; chorismate from D-erythrose 4-phosphate and phosphoenolpyruvate: step 7/7. Catalyzes the anti-1,4-elimination of the C-3 phosphate and the C-6 proR hydrogen from 5-enolpyruvylshikimate-3-phosphate (EPSP) to yield chorismate, which is the branch point compound that serves as the starting substrate for the three terminal pathways of aromatic amino acid biosynthesis. This reaction introduces a second double bond into the aromatic ring system. The chain is Chorismate synthase from Trichormus variabilis (strain ATCC 29413 / PCC 7937) (Anabaena variabilis).